The primary structure comprises 397 residues: Serine protease MT3772 (397 aa).

Helical transmembrane passes span 9–29 (IAVLAVAFIAAISGWRAGALG), 32–52 (LSFGGVLLGATAGVLLAPHIV), 62–82 (LFAALFLILALVVVGEVAGVV), and 102–122 (VIGVGVQLVVVLTAAWLLAMP). Residues Cys-214 and Cys-395 are joined by a disulfide bond. The Proton acceptor role is filled by His-235. Residue Asp-264 is part of the active site. Ser-343 serves as the catalytic Charge relay system.

Belongs to the peptidase S1C family. Monomer.

It localises to the membrane. In terms of biological role, required for M.tuberculosis resistance to oxidative stress in addition to its role in resistance to acid, which is essential for virulence. In Mycobacterium tuberculosis (strain CDC 1551 / Oshkosh), this protein is Serine protease MT3772.